Here is a 384-residue protein sequence, read N- to C-terminus: Potassium channel subfamily K member 18 (384 aa).

Over 1 to 23 (MEVSGHPQARRCCPEALGKLFPG) the chain is Cytoplasmic. The chain crosses the membrane as a helical span at residues 24 to 44 (LCFLCFLVTYALVGAVVFSAI). N-linked (GlcNAc...) asparagine glycosylation occurs at Asn-70. The segment at residues 103 to 129 (FLSSLFFCCTVFSTVGYGYIYPVTRLG) is an intramembrane region (pore-forming). Thr-116, Val-117, Gly-118, and Tyr-119 together coordinate K(+). The interval 116 to 121 (TVGYGY) is selectivity filter 1. Residues 130–148 (KYLCMLYALFGIPLMFLVL) traverse the membrane as a helical segment. The Cytoplasmic portion of the chain corresponds to 149-280 (TDTGDILATI…EVGQQVERLD (132 aa)). The tract at residues 200–205 (PQIIIS) is interaction with calcineurin. Residues 249–254 (RSNSCP) are interaction with YWHAH. Phosphoserine is present on residues Ser-252 and Ser-264. The helical transmembrane segment at 281–301 (IPLPIIALIVFAYISCAAAIL) threads the bilayer. An intramembrane region (pore-forming) is located at residues 314–328 (FYFCFVTLTTIGFGD). A selectivity filter 2 region spans residues 323 to 328 (TIGFGD). Residues 335-355 (NFFLFFSIYIIVGMEIVFIAF) traverse the membrane as a helical segment. The Cytoplasmic segment spans residues 356 to 384 (KLVQNRLIDIYKNVMLFFAKGKFYHLVKK).

It belongs to the two pore domain potassium channel (TC 1.A.1.8) family. As to quaternary structure, homodimer. Heterodimer with KCNK2. Heterodimer with KCNK10. Interacts with calcineurin. Interacts with YWHAH, in a phosphorylation-dependent manner. In terms of processing, N-glycosylated. Post-translationally, phosphorylation of Ser-264 is required for the binding of 14-3-3eta/YWHAH. Calcineurin-mediated dephosphorylation enhances channel activity. Expressed in dorsal root ganglion and trigeminal ganglion neurons. Detected at low levels in spinal cord. Expressed in regulatory T cells (at protein level).

The protein localises to the cell membrane. It catalyses the reaction K(+)(in) = K(+)(out). Its activity is regulated as follows. Activated by volatile anesthetics but inhibited by amide local anesthetics. Inhibited by Ba(2+) ions. Inhibited by free polyunsaturated fatty acids. Channel conductance is sensitive to intracellular pH, it decreases at acidic pH and increases at basic pH. In contrast to its mouse ortholog, it is not regulated by extracellular protons. Insensitive to changes in temperature. Functionally, k(+) channel that conducts outward and inward rectifying currents at depolarized and hyperpolarized membrane potentials, respectively. The outward rectifying currents are voltage-dependent, coupled to K(+) electrochemical gradient across the membrane, whereas the inward currents can be induced in response to activation of Ca(2+)-mobilizing receptors. Homo- and heterodimerizes to form functional channels with distinct regulatory and gating properties. In trigeminal ganglia sensory neurons, the heterodimers of KCNK18/TRESK and KCNK2/TREK-1 or KCNK10/TREK-2 inhibit neuronal firing and neurogenic inflammation by stabilizing the resting membrane potential at K(+) equilibrium potential as well as by regulating the threshold of action potentials and the spike frequency. In thymocytes, conducts K(+) currents upon T cell receptor (TCR) signaling leading to sustained Ca(2+) influx and NF-kappa-B activation, FOXP3 transcription and positive selection of regulatory T cell (Treg) progenitor subsets. Appears to mediate the analgesics effects of hydroxy-alpha-sanshool, a metabolite naturally present in Schezuan pepper and other Xanthoxylum plants. This chain is Potassium channel subfamily K member 18, found in Homo sapiens (Human).